The primary structure comprises 877 residues: Leucine--tRNA ligase (877 aa).

The 'HIGH' region motif lies at 43–53 (PYPSGRIHMGH). The 'KMSKS' region signature appears at 628 to 632 (KMSKS). K631 is an ATP binding site.

The protein belongs to the class-I aminoacyl-tRNA synthetase family.

It localises to the cytoplasm. The catalysed reaction is tRNA(Leu) + L-leucine + ATP = L-leucyl-tRNA(Leu) + AMP + diphosphate. This Brucella abortus (strain S19) protein is Leucine--tRNA ligase.